The primary structure comprises 246 residues: NH(3)-dependent NAD(+) synthetase (246 aa).

29 to 36 (GLSGGIDS) provides a ligand contact to ATP. Position 35 (Asp35) interacts with Mg(2+). Residue Arg110 coordinates deamido-NAD(+). Thr130 provides a ligand contact to ATP. Residue Glu135 coordinates Mg(2+). 2 residues coordinate ATP: Lys159 and Ser181.

This sequence belongs to the NAD synthetase family. As to quaternary structure, homodimer.

The enzyme catalyses deamido-NAD(+) + NH4(+) + ATP = AMP + diphosphate + NAD(+) + H(+). Its pathway is cofactor biosynthesis; NAD(+) biosynthesis; NAD(+) from deamido-NAD(+) (ammonia route): step 1/1. In terms of biological role, catalyzes the ATP-dependent amidation of deamido-NAD to form NAD. Uses ammonia as a nitrogen source. In Campylobacter jejuni subsp. jejuni serotype O:2 (strain ATCC 700819 / NCTC 11168), this protein is NH(3)-dependent NAD(+) synthetase.